We begin with the raw amino-acid sequence, 339 residues long: DNA-directed RNA polymerase subunit alpha (339 aa).

Residues 1–235 (MVIQKNWQEL…DQLQVFVNFE (235 aa)) are alpha N-terminal domain (alpha-NTD). The tract at residues 251–339 (FNPALLKKVD…DLAKRFEEHY (89 aa)) is alpha C-terminal domain (alpha-CTD).

The protein belongs to the RNA polymerase alpha chain family. As to quaternary structure, homodimer. The RNAP catalytic core consists of 2 alpha, 1 beta, 1 beta' and 1 omega subunit. When a sigma factor is associated with the core the holoenzyme is formed, which can initiate transcription.

It carries out the reaction RNA(n) + a ribonucleoside 5'-triphosphate = RNA(n+1) + diphosphate. DNA-dependent RNA polymerase catalyzes the transcription of DNA into RNA using the four ribonucleoside triphosphates as substrates. The protein is DNA-directed RNA polymerase subunit alpha of Methylobacterium radiotolerans (strain ATCC 27329 / DSM 1819 / JCM 2831 / NBRC 15690 / NCIMB 10815 / 0-1).